A 283-amino-acid polypeptide reads, in one-letter code: MSFFDIEAQSSKGNSQQEPQFSTNQKTKELSNLIETFAEQSRVLEKECTKIGSKRDSKELRYKIETELIPNCTSVRDKIESNILIHQNGKLSADFKNLKTKYQSLQQSYNQRKSLFPLKTPISPGTSKERKDIHPRTEAVRQDPESSYISIKVNEQSPLLHNEGQHQLQLQEEQEQQQQGLSQEELDFQTIIHQERSQQIGRIHTAVQEVNAIFHQLGSLVKEQGEQVTTIDENISHLHDNMQNANKQLTRADQHQRDRNKCGKVTLIIIIVVCMVVLLAVLS.

Residues M1–K26 are disordered. Residues M1–K261 are Cytoplasmic-facing. The span at A8 to Q25 shows a compositional bias: polar residues. 2 coiled-coil regions span residues K28–C48 and L84–Q111. 2 disordered regions span residues F116–S146 and N162–S182. Positions S127–P144 are enriched in basic and acidic residues. Residues Q169 to Q189 adopt a coiled-coil conformation. In terms of domain architecture, t-SNARE coiled-coil homology spans T190–A252. The helical; Anchor for type IV membrane protein transmembrane segment at C262–L282 threads the bilayer. Residue S283 is a topological domain, vacuolar.

This sequence belongs to the syntaxin family. As to quaternary structure, associates with VAM7.

It is found in the vacuole membrane. In terms of biological role, required for vacuolar assembly. Provides the t-SNARE function in a late step of the vacuolar assembly. Required for homotypic vacuole membrane fusion, autophagy and fusion of biosynthetic transport vesicles with the vacuole. Required for the delivery of alpha-factor receptor-ligand complexes to the vacuole. In Saccharomyces cerevisiae (strain ATCC 204508 / S288c) (Baker's yeast), this protein is Syntaxin VAM3 (VAM3).